We begin with the raw amino-acid sequence, 184 residues long: dCTP deaminase (184 aa).

DCTP is bound by residues 107 to 112, 131 to 133, glutamine 152, tyrosine 166, and glutamine 176; these read KSTYAR and TLE. The Proton donor/acceptor role is filled by glutamate 133.

It belongs to the dCTP deaminase family. Homotrimer.

It carries out the reaction dCTP + H2O + H(+) = dUTP + NH4(+). The protein operates within pyrimidine metabolism; dUMP biosynthesis; dUMP from dCTP (dUTP route): step 1/2. Catalyzes the deamination of dCTP to dUTP. In Novosphingobium aromaticivorans (strain ATCC 700278 / DSM 12444 / CCUG 56034 / CIP 105152 / NBRC 16084 / F199), this protein is dCTP deaminase.